The chain runs to 501 residues: Aldehyde dehydrogenase 1A1 (501 aa).

Serine 2 carries the N-acetylserine modification. Lysine 91 and lysine 128 each carry N6-acetyllysine. NAD(+) contacts are provided by residues 167-170 (IPWN), 193-196 (KPAE), 226-227 (GP), and 246-247 (GS). Lysine 252 bears the N6-acetyllysine mark. The Proton acceptor role is filled by glutamate 269. An NAD(+)-binding site is contributed by 269–271 (ELG). The active-site Nucleophile is the cysteine 303. The segment at 336 to 501 (LTPGINQGPQ…VAMKISQKNS (166 aa)) is mediates interaction with PRMT3. A Phosphothreonine modification is found at threonine 337. 349–353 (EQHDK) is a binding site for NAD(+). N6-acetyllysine is present on residues lysine 353 and lysine 367. 400 to 402 (EIF) provides a ligand contact to NAD(+). Lysine 410 bears the N6-acetyllysine mark. Serine 413 bears the Phosphoserine mark. 3 positions are modified to N6-acetyllysine: lysine 419, lysine 435, and lysine 495.

Belongs to the aldehyde dehydrogenase family. In terms of assembly, homotetramer. Interacts with PRMT3; the interaction is direct, inhibits ALDH1A1 aldehyde dehydrogenase activity and is independent of the methyltransferase activity of PRMT3. In terms of processing, the N-terminus is blocked most probably by acetylation. Expressed in retina. Expressed in lens and cornea (at protein level). Expressed by midbrain dopamine neurons.

It localises to the cytoplasm. Its subcellular location is the cytosol. The protein localises to the cell projection. It is found in the axon. It carries out the reaction an aldehyde + NAD(+) + H2O = a carboxylate + NADH + 2 H(+). The catalysed reaction is all-trans-retinal + NAD(+) + H2O = all-trans-retinoate + NADH + 2 H(+). The enzyme catalyses 9-cis-retinal + NAD(+) + H2O = 9-cis-retinoate + NADH + 2 H(+). It catalyses the reaction 11-cis-retinal + NAD(+) + H2O = 11-cis-retinoate + NADH + 2 H(+). It carries out the reaction 13-cis-retinal + NAD(+) + H2O = 13-cis-retinoate + NADH + 2 H(+). The catalysed reaction is 4-aminobutanal + NAD(+) + H2O = 4-aminobutanoate + NADH + 2 H(+). The enzyme catalyses 3-deoxyglucosone + NAD(+) + H2O = 2-dehydro-3-deoxy-D-gluconate + NADH + 2 H(+). It catalyses the reaction (E)-4-hydroxynon-2-enal + NAD(+) + H2O = (E)-4-hydroxynon-2-enoate + NADH + 2 H(+). It carries out the reaction malonaldehyde + NAD(+) + H2O = 3-oxopropanoate + NADH + 2 H(+). The catalysed reaction is hexanal + NAD(+) + H2O = hexanoate + NADH + 2 H(+). The enzyme catalyses propanal + NAD(+) + H2O = propanoate + NADH + 2 H(+). It catalyses the reaction acetaldehyde + NAD(+) + H2O = acetate + NADH + 2 H(+). It carries out the reaction benzaldehyde + NAD(+) + H2O = benzoate + NADH + 2 H(+). It participates in cofactor metabolism; retinol metabolism. With respect to regulation, the aminobutyraldehyde dehydrogenase activity is negatively regulated by ethanol in vivo. In terms of biological role, cytosolic dehydrogenase that catalyzes the irreversible oxidation of a wide range of aldehydes to their corresponding carboxylic acid. Functions downstream of retinol dehydrogenases and catalyzes the oxidation of retinaldehyde into retinoic acid, the second step in the oxidation of retinol/vitamin A into retinoic acid. This pathway is crucial to control the levels of retinol and retinoic acid, two important molecules which excess can be teratogenic and cytotoxic. Also oxidizes aldehydes resulting from lipid peroxidation like (E)-4-hydroxynon-2-enal/HNE, malonaldehyde and hexanal that form protein adducts and are highly cytotoxic. By participating for instance to the clearance of (E)-4-hydroxynon-2-enal/HNE in the lens epithelium prevents the formation of HNE-protein adducts and lens opacification. Also functions downstream of fructosamine-3-kinase in the fructosamine degradation pathway by catalyzing the oxidation of 3-deoxyglucosone, the carbohydrate product of fructosamine 3-phosphate decomposition, which is itself a potent glycating agent that may react with lysine and arginine side-chains of proteins. Also has an aminobutyraldehyde dehydrogenase activity and is probably part of an alternative pathway for the biosynthesis of GABA/4-aminobutanoate in midbrain, thereby playing a role in GABAergic synaptic transmission. The protein is Aldehyde dehydrogenase 1A1 of Mus musculus (Mouse).